The primary structure comprises 357 residues: Protein FAM118A (357 aa).

M1 carries the post-translational modification N-acetylmethionine. The helical transmembrane segment at 30–50 (LLLVIGTGVSAAVAPGIPALC) threads the bilayer. Phosphoserine is present on S311.

Belongs to the FAM118 family.

Its subcellular location is the membrane. This chain is Protein FAM118A (FAM118A), found in Homo sapiens (Human).